Consider the following 1200-residue polypeptide: Zinc finger protein 804A (1200 aa).

The segment at 57 to 81 adopts a C2H2-type zinc-finger fold; sequence FYCELCDKQYYKHQEFDNHINSYDH. Disordered regions lie at residues 252–280, 343–367, 582–687, 727–777, 799–828, and 874–949; these read STSH…PEAM, DGPV…RTSA, HWFH…NCGG, EDDG…SDES, QPKK…NYPM, and PYNP…TNPE. Residues 585–603 show a composition bias toward basic residues; sequence HKSRRKKKRRKLCRYHPGK. Residues 604-666 are compositionally biased toward basic and acidic residues; the sequence is SSKEPEGSGK…ASTHLGEKET (63 aa). 2 stretches are compositionally biased toward polar residues: residues 667–687 and 732–756; these read MNTT…NCGG and LASQ…SLTN. Residues 800–811 are compositionally biased toward basic residues; it reads PKKKRRRKRSRL. The span at 891-944 shows a compositional bias: polar residues; the sequence is TETTPCDSSQTSNDLATPVNVTRDPSNSTTDNTLLEHNQRSQTTNSNEKQTPFK.

This chain is Zinc finger protein 804A (Znf804a), found in Mus musculus (Mouse).